The primary structure comprises 92 residues: Small ribosomal subunit protein uS19 (92 aa).

The protein belongs to the universal ribosomal protein uS19 family.

Functionally, protein S19 forms a complex with S13 that binds strongly to the 16S ribosomal RNA. The protein is Small ribosomal subunit protein uS19 of Gloeobacter violaceus (strain ATCC 29082 / PCC 7421).